The primary structure comprises 469 residues: Glutamate--tRNA ligase 2 (469 aa).

A 'HIGH' region motif is present at residues 11–21 (PSPTGHLHLGG). The 'KMSKS' region motif lies at 238-242 (KLSKR). Lysine 241 is an ATP binding site.

The protein belongs to the class-I aminoacyl-tRNA synthetase family. Glutamate--tRNA ligase type 1 subfamily. Monomer.

The protein resides in the cytoplasm. The enzyme catalyses tRNA(Glu) + L-glutamate + ATP = L-glutamyl-tRNA(Glu) + AMP + diphosphate. Catalyzes the attachment of glutamate to tRNA(Glu) in a two-step reaction: glutamate is first activated by ATP to form Glu-AMP and then transferred to the acceptor end of tRNA(Glu). This is Glutamate--tRNA ligase 2 from Ehrlichia chaffeensis (strain ATCC CRL-10679 / Arkansas).